The sequence spans 515 residues: Fatty acyl-CoA reductase 2 (515 aa).

Residues 1–464 are Cytoplasmic-facing; the sequence is MSMIAAFYSN…KAKQHLRRLR (464 aa). Residues 465 to 484 form a helical membrane-spanning segment; it reads NIHYLFNTALFLIIWRLLIA. Residues 485-515 lie on the Peroxisomal side of the membrane; the sequence is RSQMARNVWFFIVSFCYKFISYFRASSTLKV.

Belongs to the fatty acyl-CoA reductase family. As to expression, specifically expressed in the meibomian glands of the eyelid and the sebaceous glands of the skin. Also expressed in the brain where large quantities of ether lipids are synthesized.

The protein resides in the peroxisome membrane. The catalysed reaction is a long-chain fatty acyl-CoA + 2 NADPH + 2 H(+) = a long-chain primary fatty alcohol + 2 NADP(+) + CoA. The enzyme catalyses hexadecanoyl-CoA + 2 NADPH + 2 H(+) = hexadecan-1-ol + 2 NADP(+) + CoA. It catalyses the reaction octadecanoyl-CoA + 2 NADPH + 2 H(+) = octadecan-1-ol + 2 NADP(+) + CoA. It carries out the reaction a very long-chain fatty acyl-CoA + 2 NADPH + 2 H(+) = a very long-chain primary fatty alcohol + 2 NADP(+) + CoA. The catalysed reaction is an ultra-long-chain fatty acyl-CoA + 2 NADPH + 2 H(+) = an ultra long-chain primary fatty alcohol + 2 NADP(+) + CoA. The enzyme catalyses eicosanoyl-CoA + 2 NADPH + 2 H(+) = eicosan-1-ol + 2 NADP(+) + CoA. It catalyses the reaction docosanoyl-CoA + 2 NADPH + 2 H(+) = docosan-1-ol + 2 NADP(+) + CoA. It carries out the reaction tetracosanoyl-CoA + 2 NADPH + 2 H(+) = tetracosan-1-ol + 2 NADP(+) + CoA. The catalysed reaction is hexacosanoyl-CoA + 2 NADPH + 2 H(+) = hexacosan-1-ol + 2 NADP(+) + CoA. The enzyme catalyses octacosanoyl-CoA + 2 NADPH + 2 H(+) = octacosan-1-ol + 2 NADP(+) + CoA. It catalyses the reaction triacontanoyl-CoA + 2 NADPH + 2 H(+) = triacontan-1-ol + 2 NADP(+) + CoA. It carries out the reaction 18-methylnonadecanoyl-CoA + 2 NADPH + 2 H(+) = 18-methylnonadecan-1-ol + 2 NADP(+) + CoA. The catalysed reaction is 20-methylheneicosanoyl-CoA + 2 NADPH + 2 H(+) = 20-methylheneicosan-1-ol + 2 NADP(+) + CoA. The enzyme catalyses 22-methyltricosanoyl-CoA + 2 NADPH + 2 H(+) = 22-methyltricosan-1-ol + 2 NADP(+) + CoA. It catalyses the reaction 24-methylpentacosanoyl-CoA + 2 NADPH + 2 H(+) = 24-methylpentacosan-1-ol + 2 NADP(+) + CoA. Functionally, catalyzes the reduction of saturated but not unsaturated C16 or C18 fatty acyl-CoA to fatty alcohols. A lower activity can be observed with shorter fatty acyl-CoA substrates. Can produce very long-chain and ultra long-chain FAls, regardless of whether they have a straight or branched chain. It may play a role in the production of ether lipids/plasmalogens and wax monoesters which synthesis requires fatty alcohols as substrates. In Mus musculus (Mouse), this protein is Fatty acyl-CoA reductase 2.